We begin with the raw amino-acid sequence, 382 residues long: LIM homeobox transcription factor 1-alpha (382 aa).

LIM zinc-binding domains follow at residues 33–92 (SVCE…LFAV) and 92–154 (VKCG…EREL). Disordered regions lie at residues 161-208 (AASD…QQRR) and 252-286 (KLARRQQQQQQDQQNTQRLTSAQTNGSGNAGMEGI). Positions 195-254 (PKRPRTILTTQQRRAFKASFEVSSKPCRKVRETLAAETGLSVRVVQVWFQNQRAKMKKLA) form a DNA-binding region, homeobox. Over residues 256 to 269 (RQQQQQQDQQNTQR) the composition is skewed to low complexity.

Its subcellular location is the nucleus. In terms of biological role, acts as a transcriptional activator by binding to an A/T-rich sequence, the FLAT element, in the insulin gene promoter. Required for development of the roof plate and, in turn, for specification of dorsal cell fates in the CNS and developing vertebrae. This chain is LIM homeobox transcription factor 1-alpha (Lmx1a), found in Mus musculus (Mouse).